We begin with the raw amino-acid sequence, 842 residues long: Squamosa promoter-binding-like protein 9 (842 aa).

Residues 1–18 (MDAPGGGGGGGGGGGGVD) show a composition bias toward gly residues. Disordered stretches follow at residues 1-22 (MDAP…AGEP), 59-97 (ALLP…RVRK), and 140-168 (RKKP…TPAE). Residues 69-85 (PAEAEAEAAGPASLPSS) show a composition bias toward low complexity. Gly residues predominate over residues 146–162 (AGRGSGAAVGGSGGGAS). The SBP-type; atypical zinc-finger motif lies at 168-245 (EMKCQVPGCE…ERHNKRRRRK (78 aa)). Zn(2+) is bound by residues C171, C176, C193, C196, C212, C215, H219, and C231. The short motif at 228 to 244 (KRSCRRKLERHNKRRRR) is the Bipartite nuclear localization signal element. Residues 236 to 246 (ERHNKRRRRKP) are compositionally biased toward basic residues. The interval 236–256 (ERHNKRRRRKPDSKGILEKDI) is disordered.

In terms of tissue distribution, ubiquitous.

It localises to the nucleus. Trans-acting factor that binds specifically to the consensus nucleotide sequence 5'-TNCGTACAA-3'. In Oryza sativa subsp. japonica (Rice), this protein is Squamosa promoter-binding-like protein 9 (SPL9).